We begin with the raw amino-acid sequence, 104 residues long: Naphthalene 1,2-dioxygenase/salicylate 5-hydroxylase systems, ferredoxin component (104 aa).

Positions 6 to 101 (IDAACLDDIP…VKIENMRVML (96 aa)) constitute a Rieske domain. The [2Fe-2S] cluster site is built by C45, H47, C64, and H67.

The protein belongs to the bacterial ring-hydroxylating dioxygenase ferredoxin component family. In terms of assembly, ferredoxin NagAb belongs to both the salicylate 5-hydroxylase (S5H) and the naphthalene 1,2-dioxygenase (NDO) multicomponent enzyme systems. The NDO multicomponent enzyme system is composed of an electron transfer component and a dioxygenase component (iron sulfur protein (ISP)). The electron transfer component is composed of a ferredoxin reductase (NagAa) and a ferredoxin (NagAb), and the dioxygenase component is formed by a large alpha subunit (NagAc) and a small beta subunit (NagAd). The S5H multicomponent enzyme system is composed of an electron transfer component and a monooxygenase component. The electron transfer component is composed of a ferredoxin reductase (NagAa) and a ferredoxin (NagAb), and the monooxygenase component is formed by a large subunit (NagG) and a small subunit (NagH). [2Fe-2S] cluster is required as a cofactor.

It functions in the pathway aromatic compound metabolism; naphthalene degradation. In terms of biological role, component of two multicomponent enzyme systems which are involved in the catabolism of naphthalene. Plays a role as an electron transfer component for both salicylate 5-hydroxylase (S5H) and naphthalene 1,2-dioxygenase (NDO) systems, by transferring electrons to the oxygenase components. The protein is Naphthalene 1,2-dioxygenase/salicylate 5-hydroxylase systems, ferredoxin component of Ralstonia sp.